The sequence spans 61 residues: Statherin (61 aa).

The N-terminal stretch at 1–19 is a signal peptide; the sequence is MXFLXFXLXLLXMXXMXXX. Positions 20 to 25 are hydroxyapatite-binding; inhibits crystal growth; the sequence is DSSEEK. A phosphoserine mark is found at serine 21 and serine 22. The tract at residues 37–61 is disordered; sequence RYGPYQPFAPQPLYPQPYQPYQPQY. Residues 37-61 are hydrophobic; inhibits precipitation of calcium phosphate salts; sequence RYGPYQPFAPQPLYPQPYQPYQPQY. Residues 43–61 are compositionally biased toward pro residues; that stretch reads PFAPQPLYPQPYQPYQPQY.

This sequence belongs to the histatin/statherin family. In terms of tissue distribution, secreted by parotid and submandibular glands.

It is found in the secreted. Salivary protein that stabilizes saliva supersaturated with calcium salts by inhibiting the precipitation of calcium phosphate salts. It also modulates hydroxyapatite crystal formation on the tooth surface. In Macaca fascicularis (Crab-eating macaque), this protein is Statherin (STATH).